The primary structure comprises 154 residues: Leghemoglobin-1 (154 aa).

A Globin domain is found at 3 to 151 (VLTDVQVALV…LAIIIKKEMK (149 aa)). Ser46 contacts heme b. Ser46 bears the Phosphoserine mark. Position 64 (His64) interacts with O2. Heme b contacts are provided by Lys67, His98, and Lys101. Nitrated tyrosine is present on Tyr139.

The protein belongs to the plant globin family. In terms of assembly, monomer. Nitrated in effective nodules and particularly in hypoxic conditions; this mechanism may play a protective role in the symbiosis by buffering toxic peroxynitrite NO(2)(-). Nitration level decrease during nodule senescence. Post-translationally, phosphorylation at Ser-46 disrupts the molecular environment of its porphyrin ring oxygen binding pocket, thus leading to a reduced oxygen consumption and to the delivery of oxygen O(2) to symbiosomes. As to expression, accumulates in developing root nodules and present in roots, especially in the upper part. Detected in leaves at low levels.

The protein resides in the cytoplasm. It localises to the cytosol. The protein localises to the nucleus. Functionally, leghemoglobin that reversibly binds oxygen O(2) through a pentacoordinated heme iron. In root nodules, facilitates the diffusion of oxygen to the bacteroids while preventing the bacterial nitrogenase from being inactivated by buffering dioxygen, nitric oxide and carbon monoxide, and promoting the formation of reactive oxygen species (ROS, e.g. H(2)O(2)). This role is essential for symbiotic nitrogen fixation (SNF). This Lupinus luteus (European yellow lupine) protein is Leghemoglobin-1.